Reading from the N-terminus, the 432-residue chain is EF-hand calcium-binding domain-containing protein 3 (432 aa).

EF-hand domains follow at residues 45-80 (AQLEAFRNAYNFFTKDRTGCIDSHGLMSTVAKLGMN) and 81-116 (LNAYDIYNELKCADRDRDGKINFSDFIDVLTDKKLF). Ca(2+) is bound by residues D94, D96, D98, K100, and D105. Y273 is subject to Phosphotyrosine. The tract at residues 394 to 432 (NVNKTSPSNSGLSSPSDLSESDPETGRKRKRKSSRGFRQ) is disordered. The segment covering 399–411 (SPSNSGLSSPSDL) has biased composition (low complexity). A compositionally biased stretch (basic residues) spans 420-432 (RKRKRKSSRGFRQ).

The chain is EF-hand calcium-binding domain-containing protein 3 (Efcab3) from Rattus norvegicus (Rat).